A 117-amino-acid chain; its full sequence is Large ribosomal subunit protein bL20c (117 aa).

This sequence belongs to the bacterial ribosomal protein bL20 family.

It localises to the plastid. The protein resides in the chloroplast. In terms of biological role, binds directly to 23S ribosomal RNA and is necessary for the in vitro assembly process of the 50S ribosomal subunit. It is not involved in the protein synthesizing functions of that subunit. This Platanus occidentalis (Sycamore) protein is Large ribosomal subunit protein bL20c.